The chain runs to 150 residues: Cytochrome c oxidase subunit 5A, mitochondrial (150 aa).

The N-terminal 41 residues, 1–41, are a transit peptide targeting the mitochondrion; sequence MLGAALRRCAVAATTWAGPRGHLHSARTPGPAAAIQSVRCY. The SIFI-degron motif lies at 2–17; the sequence is LGAALRRCAVAATTWA. Residues Lys87 and Lys113 each carry the N6-acetyllysine modification. Phosphothreonine is present on Thr141.

This sequence belongs to the cytochrome c oxidase subunit 5A family. Component of the cytochrome c oxidase (complex IV, CIV), a multisubunit enzyme composed of 14 subunits. The complex is composed of a catalytic core of 3 subunits MT-CO1, MT-CO2 and MT-CO3, encoded in the mitochondrial DNA, and 11 supernumerary subunits COX4I, COX5A, COX5B, COX6A, COX6B, COX6C, COX7A, COX7B, COX7C, COX8 and NDUFA4, which are encoded in the nuclear genome. The complex exists as a monomer or a dimer and forms supercomplexes (SCs) in the inner mitochondrial membrane with NADH-ubiquinone oxidoreductase (complex I, CI) and ubiquinol-cytochrome c oxidoreductase (cytochrome b-c1 complex, complex III, CIII), resulting in different assemblies (supercomplex SCI(1)III(2)IV(1) and megacomplex MCI(2)III(2)IV(2)). Interacts with AFG1L. Interacts with RAB5IF. In response to mitochondrial stress, the precursor protein is ubiquitinated by the SIFI complex in the cytoplasm before mitochondrial import, leading to its degradation. Within the SIFI complex, UBR4 initiates ubiquitin chain that are further elongated or branched by KCMF1.

It is found in the mitochondrion inner membrane. The protein operates within energy metabolism; oxidative phosphorylation. Its function is as follows. Component of the cytochrome c oxidase, the last enzyme in the mitochondrial electron transport chain which drives oxidative phosphorylation. The respiratory chain contains 3 multisubunit complexes succinate dehydrogenase (complex II, CII), ubiquinol-cytochrome c oxidoreductase (cytochrome b-c1 complex, complex III, CIII) and cytochrome c oxidase (complex IV, CIV), that cooperate to transfer electrons derived from NADH and succinate to molecular oxygen, creating an electrochemical gradient over the inner membrane that drives transmembrane transport and the ATP synthase. Cytochrome c oxidase is the component of the respiratory chain that catalyzes the reduction of oxygen to water. Electrons originating from reduced cytochrome c in the intermembrane space (IMS) are transferred via the dinuclear copper A center (CU(A)) of subunit 2 and heme A of subunit 1 to the active site in subunit 1, a binuclear center (BNC) formed by heme A3 and copper B (CU(B)). The BNC reduces molecular oxygen to 2 water molecules using 4 electrons from cytochrome c in the IMS and 4 protons from the mitochondrial matrix. This is Cytochrome c oxidase subunit 5A, mitochondrial (COX5A) from Symphalangus syndactylus (Siamang).